The following is a 638-amino-acid chain: Chaperone protein DnaK (638 aa).

A Phosphothreonine; by autocatalysis modification is found at T196. Residues 592 to 638 (ASNLYQQPGAEAGAAPQPETNGQQESKGGDGAVNAEYEVIDGDDDKK) form a disordered region. The span at 597–610 (QQPGAEAGAAPQPE) shows a compositional bias: low complexity. Positions 629-638 (EVIDGDDDKK) are enriched in acidic residues.

The protein belongs to the heat shock protein 70 family.

Acts as a chaperone. This chain is Chaperone protein DnaK, found in Chlorobaculum parvum (strain DSM 263 / NCIMB 8327) (Chlorobium vibrioforme subsp. thiosulfatophilum).